A 164-amino-acid polypeptide reads, in one-letter code: MRVVIQRVKGAILSVRKENIGENEKELEIISEIKNGLICFLGIHKNDTWEDALYIIRKCLNLRLWNNDNKTWDKNVKDLNYELLIVSQFTLFGNTKKGNKPDFHLAKEPNEALIFYNKIIDEFKKQYNDDKIKIGKFGNYMNIDVTNDGPVTIYIDTHDINLNK.

Trp72 and Phe89 together coordinate tRNA. Thr90 (nucleophile) is an active-site residue. The short motif at 104–107 (HLAK) is the C-terminal adenosine nucleotide of tRNA element. The Gly-cisPro motif, allows the protein to recognize chirality of D-amino acids signature appears at 149 to 150 (GP).

This sequence belongs to the DTD family. Homodimer.

It is found in the cytoplasm. The catalysed reaction is glycyl-tRNA(Ala) + H2O = tRNA(Ala) + glycine + H(+). It catalyses the reaction a D-aminoacyl-tRNA + H2O = a tRNA + a D-alpha-amino acid + H(+). It carries out the reaction D-tyrosyl-tRNA(Tyr) + H2O = D-tyrosine + tRNA(Tyr). In terms of biological role, D-aminoacyl-tRNA deacylase, with no observable activity on tRNAs charged with their cognate L-amino acid. Probably acts by rejecting L-amino acids from its binding site rather than specific recognition of D-amino acids. Catalyzes the hydrolysis of D-tyrosyl-tRNA(Tyr), has no activity on correctly charged L-tyrosyl-tRNA(Tyr). Hydrolyzes correctly charged, achiral, glycyl-tRNA(Gly). Deacylates mischarged D.melanogaster and E.coli glycyl-tRNA(Ala). Probably acts via tRNA-based rather than protein-based catalysis. Acts on tRNAs only when the D-amino acid is either attached to the ribose 3'-OH or transferred to the 3'-OH from the 2'-OH through rapid transesterification. Binds a number of other D-amino acids (D-Arg, D-Glu, D-His, D-Lys, D-Ser), suggesting it may also deacylate other mischarged tRNAs. This Plasmodium falciparum (isolate 3D7) protein is D-aminoacyl-tRNA deacylase.